The primary structure comprises 364 residues: Protein PTOV1 homolog (364 aa).

Positions 187–207 are disordered; it reads AKRKPGVKTPKQPQPEEPPPV.

It belongs to the Mediator complex subunit 25 family. PTOV1 subfamily.

This is Protein PTOV1 homolog from Drosophila melanogaster (Fruit fly).